The chain runs to 66 residues: Beta-toxin Cb2 (66 aa).

Residues 1–66 enclose the LCN-type CS-alpha/beta domain; the sequence is KEGYLVDLHT…VWPLPNKRCK (66 aa). 4 cysteine pairs are disulfide-bonded: cysteine 12/cysteine 65, cysteine 16/cysteine 41, cysteine 25/cysteine 46, and cysteine 29/cysteine 48.

This sequence belongs to the long (4 C-C) scorpion toxin superfamily. Sodium channel inhibitor family. Beta subfamily. In terms of tissue distribution, expressed by the venom gland.

It is found in the secreted. Beta toxins bind voltage-independently at site-4 of sodium channels (Nav) and reduces peak current and shifts the voltage of activation toward more negative potentials thereby affecting sodium channel activation and promoting spontaneous and repetitive firing. Has an inhibitory effect on voltage-gated sodium channel hNav1.6/SCN8A, affecting both the activation and inactivation processes. Also reduces the peak current of hNav1.5/SCN5A but does not shift its voltage of activation. This toxin is active against mammals and lethal to mice. In Centruroides baergi (Scorpion), this protein is Beta-toxin Cb2.